The primary structure comprises 537 residues: Cytochrome P450 4F6 (537 aa).

A heme-binding site is contributed by Cys468.

Belongs to the cytochrome P450 family. Heme is required as a cofactor. As to expression, high expression in liver and kidney. Lower expression in brain.

It is found in the endoplasmic reticulum membrane. The protein localises to the microsome membrane. It catalyses the reaction an organic molecule + reduced [NADPH--hemoprotein reductase] + O2 = an alcohol + oxidized [NADPH--hemoprotein reductase] + H2O + H(+). The polypeptide is Cytochrome P450 4F6 (Cyp4f6) (Rattus norvegicus (Rat)).